Reading from the N-terminus, the 493-residue chain is BICD family-like cargo adapter 2 (493 aa).

Coiled-coil stretches lie at residues 56 to 275 (ELGK…ELHM) and 365 to 431 (MQHV…LLST).

It belongs to the BICDR family.

The chain is BICD family-like cargo adapter 2 (bicdl2) from Xenopus laevis (African clawed frog).